We begin with the raw amino-acid sequence, 116 residues long: Beta-D-galactosidase Rv1717 (116 aa).

The region spanning leucine 40–threonine 107 is the Cupin type-2 domain.

It localises to the secreted. Its subcellular location is the cell wall. The enzyme catalyses Hydrolysis of terminal non-reducing beta-D-galactose residues in beta-D-galactosides.. Beta-galactosidase activity is activated by Mg(2+) and significantly inhibited by Ca(2+), Cd(2+), Fe(2+), Ni(2+), Cu(2+) and Zn(2+). Inhibited by EDTA. Beta-D-galactopyranosidase that specifically recognizes the beta-glycosidic bonds formed with beta-D-galactopyranose (beta-D-Gal) or N-acetylgalactosamine (beta-D-GalNAc). May target the galactoside linkages in the exopolysaccharide component of the mycobacterial extracellular polymeric substance (EPS) and help dispersal of Mtb bacteria from a deteriorating biofilm. The sequence is that of Beta-D-galactosidase Rv1717 from Mycobacterium tuberculosis (strain ATCC 25618 / H37Rv).